Here is a 119-residue protein sequence, read N- to C-terminus: MPHFKRAAVYEEQKRTGKWGQLVEETKDRIPEYSNKTIAKISHLDNGCLWPEIKVSFSHHLSILQSMCLHFIISILFSKYIFVFLFAFLLPSAFPLFILHSTLFRKPCLSIIGFLKTKV.

2 helical membrane passes run F57–F77 and Y80–H100.

The protein resides in the membrane. This is an uncharacterized protein from Saccharomyces cerevisiae (strain ATCC 204508 / S288c) (Baker's yeast).